Consider the following 1041-residue polypeptide: Nuclear migration protein unc-83 (1041 aa).

3 disordered regions span residues 258 to 283, 453 to 498, and 613 to 646; these read VGHL…TETV, IHGQ…LEDD, and IRNR…DSIS. Residues 456-465 are compositionally biased toward basic residues; the sequence is QKKPLRRASR. Residues 613-626 are compositionally biased toward basic and acidic residues; sequence IRNRDSDTAPEHSD. 2 coiled-coil regions span residues 785–816 and 931–951; these read RSKE…DLLA and KAEL…FNDM. The region spanning 986–1041 is the KASH domain; that stretch reads TENEPLTIAEAISSSRLIKFTFALSLLAALAAIFYYHVFGKPFGPHVTYVNGPPPV. Residues 1005–1024 traverse the membrane as a helical; Anchor for type IV membrane protein segment; that stretch reads FTFALSLLAALAAIFYYHVF.

As to quaternary structure, component of the unc-83-unc-84 LINC complex which contains at least unc-83 and unc-84. Within the unc-83-unc-84 LINC complex interacts with unc-84 (via C-terminus); the interaction is probably required to recruit unc-83 to the nuclear envelope where it then recruits dynein and kinesin-1 complexes to regulate nuclear migration. Interacts with bicd-1 and dlc-1. Interacts with nud-2 (via C-terminus); the interaction is direct, and is required for recruitment of nud-2 to the nuclear envelope. Interacts with klc-2; the interaction is direct. In terms of tissue distribution, predominantly expressed in migratory nuclei. Expressed in a variety of cell-types, including cells around the pharynx and in the uterus.

Its subcellular location is the nucleus membrane. The protein localises to the nucleus outer membrane. In terms of biological role, cargo-specific adapter that is involved in nuclear migration during development and thereafter. Component of the unc-83-unc-84 LINC (LInker of Nucleoskeleton and Cytoskeleton) complex where it interacts with unc-84 to form a bridge connecting the nuclear envelope to the cytoskeleton which allows for nuclear transport along microtubules. Within the complex, connects the nuclear envelope to the microtubule cytoskeleton through the kinesin-1 light chain protein klc-2 (most likely within the Kinesin 1 motor complex) to regulate nuclear migrations. Moreover, within the complex, also recruits the large microtubule-associated bicd-1-dlc-1-egal-1 and lis-1-nud-2 complexes to the nuclear envelope to regulate both the bidirectional migration of nuclei and the extent of nuclear migrations. Not required for centrosome attachment to the nucleus. The protein is Nuclear migration protein unc-83 of Caenorhabditis elegans.